Consider the following 704-residue polypeptide: RCC1 domain-containing protein DDB_G0295713 (704 aa).

RCC1 repeat units lie at residues 1 to 48 (MYCW…VKGE) and 69 to 120 (KNRC…ITDQ). Residues 221 to 246 (YNNNNNNNNNNNNNNNNNNNNNNNNN) are disordered. The segment covering 222 to 246 (NNNNNNNNNNNNNNNNNNNNNNNNN) has biased composition (low complexity). An RCC1 3 repeat occupies 298-348 (QNQVYGWGENLNGQLGIEGIDYSTEPILIELPLVEIKHISSGAYHSAFVTN). The span at 412-431 (IKDKNENNETKHTNKNKDNH) shows a compositional bias: basic and acidic residues. Residues 412 to 458 (IKDKNENNETKHTNKNKDNHDDDDESDHSDDDHHDDDDNDKDSQGIN) form a disordered region. The segment covering 432–451 (DDDDESDHSDDDHHDDDDND) has biased composition (acidic residues). Residues 668 to 698 (IEQTSTQVANSENENENEIEMKMKMKKNEMK) adopt a coiled-coil conformation.

This is RCC1 domain-containing protein DDB_G0295713 from Dictyostelium discoideum (Social amoeba).